A 285-amino-acid polypeptide reads, in one-letter code: (2Z,6Z)-farnesyl diphosphate synthase CPT6, chloroplastic (285 aa).

The transit peptide at 1-30 (MNSLFVGRPIVKSSYNVYTLPSSICGGHFF) directs the protein to the chloroplast. Aspartate 65 is a catalytic residue.

The protein belongs to the UPP synthase family. Requires Mg(2+) as cofactor. Expressed in roots and red fruits.

It localises to the plastid. The protein localises to the chloroplast. The catalysed reaction is 2 isopentenyl diphosphate + dimethylallyl diphosphate = (2Z,6Z)-farnesyl diphosphate + 2 diphosphate. The enzyme catalyses isopentenyl diphosphate + dimethylallyl diphosphate = neryl diphosphate + diphosphate. It carries out the reaction neryl diphosphate + isopentenyl diphosphate = (2Z,6Z)-farnesyl diphosphate + diphosphate. Its function is as follows. Uses neryl diphosphate to catalyze the cis-prenyl chain elongation and produce the 15 carbon product (2Z,6Z)-farnesyl diphosphate. This chain is (2Z,6Z)-farnesyl diphosphate synthase CPT6, chloroplastic, found in Solanum lycopersicum (Tomato).